Reading from the N-terminus, the 249-residue chain is Ribosomal RNA small subunit methyltransferase G (249 aa).

S-adenosyl-L-methionine is bound by residues Gly-88, Phe-93, 111–113, 139–140, and Arg-158; these read DAT and AE.

Belongs to the methyltransferase superfamily. RNA methyltransferase RsmG family.

Its subcellular location is the cytoplasm. Functionally, specifically methylates the N7 position of a guanine in 16S rRNA. This is Ribosomal RNA small subunit methyltransferase G from Thermus thermophilus (strain ATCC BAA-163 / DSM 7039 / HB27).